Consider the following 78-residue polypeptide: MAPLPGAELVQTPLQLYRYLLRCCRQLPTKGIQEHYKHAVRQSFQVHSDEDNSERIQQIIKRAIEDADWIMNKYRKQN.

Belongs to the complex I LYR family. LYRM9 subfamily.

This chain is LYR motif-containing protein 9 (Lyrm9), found in Mus musculus (Mouse).